The sequence spans 35 residues: MSDIN-like toxin proprotein 8 (35 aa).

The propeptide occupies 1 to 10 (MSDINATRLP). Positions 11–18 (FVFVASPP) form a cross-link, cyclopeptide (Phe-Pro). Positions 19-35 (CVGDDIAMVLTRGENLC) are excised as a propeptide.

It belongs to the MSDIN fungal toxin family. Post-translationally, processed by the macrocyclase-peptidase enzyme POPB to yield a toxic cyclic octapeptide. POPB first removes 10 residues from the N-terminus. Conformational trapping of the remaining peptide forces the enzyme to release this intermediate rather than proceed to macrocyclization. The enzyme rebinds the remaining peptide in a different conformation and catalyzes macrocyclization of the N-terminal 8 residues. In terms of tissue distribution, expressed in basidiocarps.

Probable toxin that belongs to the MSDIN-like toxin family responsible for a large number of food poisoning cases and deaths. In Amanita exitialis (Guangzhou destroying angel), this protein is MSDIN-like toxin proprotein 8.